A 292-amino-acid chain; its full sequence is Putative rRNA 2'-O-methyltransferase fibrillarin 3 (292 aa).

Residues 1-58 (MKPPQRGRGGGVRGGRGLARGGEGSAVRGSGRGGESGRGRGPGRVKSESDGGIKGGSK) are disordered. The span at 7-42 (GRGGGVRGGRGLARGGEGSAVRGSGRGGESGRGRGP) shows a compositional bias: gly residues. S-adenosyl-L-methionine-binding positions include 146-147 (YT), 165-166 (EH), 190-191 (DA), and 210-213 (DVNH).

This sequence belongs to the methyltransferase superfamily. Fibrillarin family. As to quaternary structure, component of box C/D small nucleolar ribonucleoprotein (snoRNP) particles. As to expression, not detectable by RT-PCR.

It localises to the nucleus. The protein localises to the nucleolus. The catalysed reaction is L-glutaminyl-[histone H2A] + S-adenosyl-L-methionine = N(5)-methyl-L-glutaminyl-[histone H2A] + S-adenosyl-L-homocysteine + H(+). Its function is as follows. S-adenosyl-L-methionine-dependent methyltransferase that has the ability to methylate both RNAs and proteins. Involved in pre-rRNA processing. Utilizes the methyl donor S-adenosyl-L-methionine to catalyze the site-specific 2'-hydroxyl methylation of ribose moieties in pre-ribosomal RNA. Site specificity is provided by a guide RNA that base pairs with the substrate. Methylation occurs at a characteristic distance from the sequence involved in base pairing with the guide RNA. Also acts as a protein methyltransferase by mediating methylation of 'Gln-105' of histone H2A (H2AQ105me), a modification that impairs binding of the FACT complex and is specifically present at 35S ribosomal DNA locus. This Arabidopsis thaliana (Mouse-ear cress) protein is Putative rRNA 2'-O-methyltransferase fibrillarin 3 (FIB3).